A 235-amino-acid chain; its full sequence is Uracil-DNA glycosylase (235 aa).

Asp71 acts as the Proton acceptor in catalysis.

It belongs to the uracil-DNA glycosylase (UDG) superfamily. UNG family.

The protein localises to the cytoplasm. The catalysed reaction is Hydrolyzes single-stranded DNA or mismatched double-stranded DNA and polynucleotides, releasing free uracil.. In terms of biological role, excises uracil residues from the DNA which can arise as a result of misincorporation of dUMP residues by DNA polymerase or due to deamination of cytosine. This chain is Uracil-DNA glycosylase, found in Campylobacter hominis (strain ATCC BAA-381 / DSM 21671 / CCUG 45161 / LMG 19568 / NCTC 13146 / CH001A).